The following is a 94-amino-acid chain: MKSFPVAFLVLLIFILSVHRGVTTRGSDVAKFCCFQYSHKILPWKWIQSYKFTRSSCSQQAVIFTTKKGHKVCAQPKEKWVQRYIALLREQQQS.

Positions 1-23 are cleaved as a signal peptide; it reads MKSFPVAFLVLLIFILSVHRGVT. 2 cysteine pairs are disulfide-bonded: cysteine 33-cysteine 57 and cysteine 34-cysteine 73.

Belongs to the intercrine beta (chemokine CC) family. As to quaternary structure, monomer.

It localises to the secreted. Its function is as follows. Chemoattractant for eosinophils and basophils. Acts as a ligand for C-C chemokine receptor CCR3 which triggers Ca(2+) mobilization in eosinophils. Also acts as a ligand for CX3C chemokine receptor CX3CR1, inducing cell chemotaxis. This Canis lupus familiaris (Dog) protein is C-C motif chemokine 26.